Consider the following 662-residue polypeptide: NADH-ubiquinone oxidoreductase chain 5 (662 aa).

The next 16 helical transmembrane spans lie at 40 to 62, 77 to 99, 112 to 129, 133 to 155, 168 to 190, 200 to 222, 243 to 262, 272 to 294, 301 to 320, 325 to 347, 360 to 382, 408 to 430, 450 to 472, 510 to 529, 609 to 631, and 636 to 658; these read AALS…IVIG, LFDS…VHLY, RFFS…VLVA, YFIM…NFWY, LTVN…WVFG, VAPY…GAMA, VSAL…LMLR, TVLV…TGLL, VIAY…VGLS, ALFH…GAVI, GGLV…SLMA, TIAY…RLVS, APMI…GYIA, LLPA…LYHV, GVIT…LVFA, and VFNE…LPSS.

It belongs to the complex I subunit 5 family.

It localises to the mitochondrion inner membrane. The catalysed reaction is a ubiquinone + NADH + 5 H(+)(in) = a ubiquinol + NAD(+) + 4 H(+)(out). Functionally, core subunit of the mitochondrial membrane respiratory chain NADH dehydrogenase (Complex I) that is believed to belong to the minimal assembly required for catalysis. Complex I functions in the transfer of electrons from NADH to the respiratory chain. The immediate electron acceptor for the enzyme is believed to be ubiquinone. The sequence is that of NADH-ubiquinone oxidoreductase chain 5 (ND5) from Cryptococcus neoformans var. grubii serotype A (strain H99 / ATCC 208821 / CBS 10515 / FGSC 9487) (Filobasidiella neoformans var. grubii).